The sequence spans 869 residues: Aconitate hydratase B (869 aa).

Residues Arg-191, 244–246 (SSR), 417–419 (QDT), and Ser-501 contribute to the substrate site. Positions 713, 772, and 775 each coordinate [4Fe-4S] cluster. Substrate-binding residues include Arg-794 and Arg-799.

It belongs to the aconitase/IPM isomerase family. Monomer. Requires [4Fe-4S] cluster as cofactor.

It catalyses the reaction citrate = D-threo-isocitrate. The catalysed reaction is (2S,3R)-3-hydroxybutane-1,2,3-tricarboxylate = 2-methyl-cis-aconitate + H2O. It functions in the pathway carbohydrate metabolism; tricarboxylic acid cycle; isocitrate from oxaloacetate: step 2/2. The protein operates within organic acid metabolism; propanoate degradation. Involved in the catabolism of short chain fatty acids (SCFA) via the tricarboxylic acid (TCA)(acetyl degradation route) and probably via the 2-methylcitrate cycle I (propionate degradation route). Catalyzes the reversible isomerization of citrate to isocitrate via cis-aconitate. Catalyzes the hydration of 2-methyl-cis-aconitate to yield (2R,3S)-2-methylisocitrate. The apo form of AcnB functions as a RNA-binding regulatory protein. The polypeptide is Aconitate hydratase B (acnB) (Pseudomonas aeruginosa (strain ATCC 15692 / DSM 22644 / CIP 104116 / JCM 14847 / LMG 12228 / 1C / PRS 101 / PAO1)).